Here is a 256-residue protein sequence, read N- to C-terminus: uncharacterized protein (256 aa).

The N-terminal stretch at 1–24 is a signal peptide; the sequence is MIKRVNKLVLGISFLFLIISIFAG. Residue Cys25 is the site of N-palmitoyl cysteine attachment. Cys25 carries the S-diacylglycerol cysteine lipid modification.

It belongs to the staphylococcal tandem lipoprotein family.

The protein localises to the cell membrane. This is an uncharacterized protein from Staphylococcus aureus (strain Mu50 / ATCC 700699).